Reading from the N-terminus, the 636-residue chain is MAPSQQEKYDIVIVGAGPVGIVLSLCMSRWGYKVKHIDNRPVPTATGRADGIQPRSTEILRNLGLKRQIMAFKPAKVYDVAFWDPLPGGQGIHRTGSWPSCPRFIDTRYPFTTLVHQGKIERVFLDEIQKAGTTVERPWTIVGFKNDGLDETYPVEVQLKSIDTNVIETVRTKYLFSGEGARSFIRQQLGIQIQYKDPISYVWGVMDGVVRTNFPDIETKCTIHSDAGSIMVIPREDNMVRLYVQIASSDDPDFDPRKTATAEDVQATARKILQPYWVEWDRVEWYSVYPIGQGISEKYTLDERVFMGGDACHTHSPKAGQGMNTAFHDALNMAWKLHAVESGLAKRSILSTYETERKDIAETLLSFDNKYAALFSKRRPTAGEVGEASHTTAAAGGEEDEFVKTFKSSCEFTSGYGVAYKPNVFTWDATHPAQSPLFDVPGVRLTPGRAFTPTTVTRLADSNHVHLEQEIPANGAFRIFIFAGKQDKTSKAITDLAANLEKERSFLSVYRRADIADVSFFENHLPHSKLFSICLVYAGEKNQIDVDSIPKILRDYHHHLYADNIPDVRVPQATYAAHEKLGFDVEKGGVVVTRPDSHVACTVQLSEGSGTVDALNAFFGSFATKPLGQDSQQSRL.

Residues 10–39 (DIVI…HIDN), 241–243 (RLY), tyrosine 289, and aspartate 310 each bind FAD. The chain crosses the membrane as a helical span at residues 11–28 (IVIVGAGPVGIVLSLCMS).

The protein belongs to the PheA/TfdB FAD monooxygenase family. FAD is required as a cofactor.

Its subcellular location is the membrane. The enzyme catalyses 4-hydroxybenzoate + NADH + O2 + H(+) = 3,4-dihydroxybenzoate + NAD(+) + H2O. It catalyses the reaction 4-hydroxybenzoate + NADPH + O2 + H(+) = 3,4-dihydroxybenzoate + NADP(+) + H2O. Functionally, FAD-dependent monooxygenase; part of the benzoic acid degradation pathway also known as the protocatechuic acid pathway. Benzoic acid debradation begins with the conversion of benzoic acid into 4-hydroxybenzoic acid through hydroxylation by the benzoate-4-monooxygenase bphA, and its partner NADPH-cytochrome P450 reductase cprA which act as a mediator in electron donation from NADPH. 4-Hydroxybenzoic acid is then converted into 3,4-dihydroxybenzoic acid (also called protocatechuic acid) by the p-hydroxybenzoate-m-hydroxylase phhA. Protocatechuic acid is converted into 3-carboxy-cis,cis-muconic acid by the intradiol ring-cleavage dioxygenase prcA, which is further metabolized through the 3-oxoadipate pathway to finally enter the tricarboxylic acid cycle (TCA). The chain is p-hydroxybenzoate-m-hydroxylase A from Aspergillus niger (strain ATCC MYA-4892 / CBS 513.88 / FGSC A1513).